The chain runs to 325 residues: Diacylglycerol acyltransferase/mycolyltransferase Ag85B (325 aa).

Positions 1 to 40 (MTDVSRKIRAWGRRLMIGTAAAVVLPGLVGLAGGAATAGA) are cleaved as a signal peptide. 82 to 83 (LR) lines the substrate pocket. The segment at 98 to 108 (FEWYYQSGLSI) is fibronectin-binding. Cys-127 and Cys-132 form a disulfide bridge. The substrate site is built by Ser-166 and Asp-194. Ser-166 acts as the Nucleophile in catalysis. Glu-270 is a catalytic residue. Residues 272–275 (FVRS), Lys-279, and 302–304 (HSW) contribute to the substrate site. His-302 is an active-site residue.

Belongs to the mycobacterial A85 antigen family.

It localises to the secreted. It carries out the reaction 2 alpha,alpha'-trehalose 6-mycolate = alpha,alpha'-trehalose 6,6'-bismycolate + alpha,alpha-trehalose. The catalysed reaction is an acyl-CoA + a 1,2-diacyl-sn-glycerol = a triacyl-sn-glycerol + CoA. Its function is as follows. The antigen 85 proteins (FbpA, FbpB, FbpC) are responsible for the high affinity of mycobacteria for fibronectin, a large adhesive glycoprotein, which facilitates the attachment of Mycobacteria to murine alveolar macrophages (AMs). They also help to maintain the integrity of the cell wall by catalyzing the transfer of mycolic acids to cell wall arabinogalactan and through the synthesis of alpha,alpha-trehalose dimycolate (TDM, cord factor). They catalyze the transfer of a mycoloyl residue from one molecule of alpha,alpha-trehalose monomycolate (TMM) to another TMM, leading to the formation of TDM. The polypeptide is Diacylglycerol acyltransferase/mycolyltransferase Ag85B (fbpB) (Mycobacterium bovis (strain BCG / Pasteur 1173P2)).